We begin with the raw amino-acid sequence, 604 residues long: Replication protein A 70 kDa DNA-binding subunit B (604 aa).

Residues 170-256 (WTIKVRVTNK…QNDYEMTLNE (87 aa)) constitute a DNA-binding region (OB). The C4-type zinc finger occupies 468–488 (CKTCNKKVTEAMDSGYWCESC).

Belongs to the replication factor A protein 1 family. Heterotrimer of RPA1, RPA2 and RPA3 (canonical replication protein A complex).

It localises to the nucleus. Functionally, component of the replication protein A complex (RPA) required for DNA recombination, repair and replication. The activity of RPA is mediated by single-stranded DNA binding and protein interactions. Probably involved in repair of double-strand DNA breaks (DSBs) induced by genotoxic stresses. The polypeptide is Replication protein A 70 kDa DNA-binding subunit B (RPA1B) (Arabidopsis thaliana (Mouse-ear cress)).